The following is a 256-amino-acid chain: 5-keto-4-deoxy-D-glucarate aldolase (256 aa).

The Proton acceptor role is filled by H50. A substrate-binding site is contributed by Q151. A Mg(2+)-binding site is contributed by E153. Residues S178 and D179 each coordinate substrate. D179 contacts Mg(2+).

Belongs to the HpcH/HpaI aldolase family. KDGluc aldolase subfamily. In terms of assembly, homohexamer; trimer of dimers. It depends on Mg(2+) as a cofactor.

It catalyses the reaction 5-dehydro-4-deoxy-D-glucarate = 2-hydroxy-3-oxopropanoate + pyruvate. The enzyme catalyses 2-dehydro-3-deoxy-D-glucarate = 2-hydroxy-3-oxopropanoate + pyruvate. Its pathway is carbohydrate acid metabolism; galactarate degradation; D-glycerate from galactarate: step 2/3. Functionally, catalyzes the reversible retro-aldol cleavage of both 5-keto-4-deoxy-D-glucarate and 2-keto-3-deoxy-D-glucarate to pyruvate and tartronic semialdehyde. This chain is 5-keto-4-deoxy-D-glucarate aldolase, found in Enterobacter sp. (strain 638).